We begin with the raw amino-acid sequence, 150 residues long: Early 4 ORF6/7 control protein (150 aa).

The disordered stretch occupies residues 1–31 (MTTSGVPFGMTLRPTRSRLSRRTPYSRDRLP). The short motif at 1 to 58 (MTTSGVPFGMTLRPTRSRLSRRTPYSRDRLPPFETETRATILEDHPLLPECNTLTMHN) is the Nuclear localization signal element.

Belongs to the adenoviridae E4-orf6/7 family. Interacts with host E2F proteins.

The protein localises to the host nucleus. Functionally, modulates viral and host transcriptional activity to promote viral genome replication. Stimulates viral E2a promoter activity by binding and inducing dimerization of host E2F. During viral infection E1A protein binds to cellular retinablastoma (RB) family members and dissociates these repressors from a complex with E2F proteins. Free E2F is then bound to E4orf6/7 which leads to transactivation of viral E2 promoter, and cellular promoters such as E2F-1 promoter. Activation of cellular E2F targets promote cell cycle S phase and thereby possibly favorises viral DNA replication process. This is Early 4 ORF6/7 control protein from Human adenovirus C serotype 2 (HAdV-2).